Consider the following 578-residue polypeptide: Proline--tRNA ligase (578 aa).

This sequence belongs to the class-II aminoacyl-tRNA synthetase family. ProS type 1 subfamily. Homodimer.

It localises to the cytoplasm. It catalyses the reaction tRNA(Pro) + L-proline + ATP = L-prolyl-tRNA(Pro) + AMP + diphosphate. In terms of biological role, catalyzes the attachment of proline to tRNA(Pro) in a two-step reaction: proline is first activated by ATP to form Pro-AMP and then transferred to the acceptor end of tRNA(Pro). As ProRS can inadvertently accommodate and process non-cognate amino acids such as alanine and cysteine, to avoid such errors it has two additional distinct editing activities against alanine. One activity is designated as 'pretransfer' editing and involves the tRNA(Pro)-independent hydrolysis of activated Ala-AMP. The other activity is designated 'posttransfer' editing and involves deacylation of mischarged Ala-tRNA(Pro). The misacylated Cys-tRNA(Pro) is not edited by ProRS. This Burkholderia ambifaria (strain MC40-6) protein is Proline--tRNA ligase.